We begin with the raw amino-acid sequence, 401 residues long: MQTLAGKKILLGISGGIAAYKCADLTRRLKERGAEVQVVMTKAAKEFITPLTMQAVSGRPVSDSLLDPAAEASMGHIELAKWADLILLAPATADLIARMAAGMGNDLLTTLVLATDAPVAVSPAMNQQMYRNVATQENIATLSRRGMEIWGPAAGEQACGDVGPGRMLEPMQLVALCEQFFQPKPLQDKSILITAGPTREAIDPVRYITNHSSGKMGYALAQAAMQLGANVTLVSGPVSLPTPVNVNRINVDSAQEMYDAVMAQASDHDIFISCAAVADYRPATIAEQKLKKTDDSDEMTITMVKNPDIVASVSAMTENRPFTVGFAAETNDVEVYARRKLEKKKLDLLCANDVSVEGQGFNSSDNAITLYWSQGEKALPLNSKAVLSMEILKQIQTLMGH.

A phosphopantothenoylcysteine decarboxylase region spans residues 1-190; the sequence is MQTLAGKKIL…FQPKPLQDKS (190 aa). Residue Cys159 is the Proton donor of the active site. The phosphopantothenate--cysteine ligase stretch occupies residues 191-401; it reads ILITAGPTRE…LKQIQTLMGH (211 aa). Residues Asp279, Lys289, 307–310, Phe326, Lys340, and Lys344 contribute to the CTP site; that span reads PDIV.

This sequence in the N-terminal section; belongs to the HFCD (homo-oligomeric flavin containing Cys decarboxylase) superfamily. In the C-terminal section; belongs to the PPC synthetase family. The cofactor is Mg(2+). It depends on FMN as a cofactor.

It carries out the reaction N-[(R)-4-phosphopantothenoyl]-L-cysteine + H(+) = (R)-4'-phosphopantetheine + CO2. It catalyses the reaction (R)-4'-phosphopantothenate + L-cysteine + CTP = N-[(R)-4-phosphopantothenoyl]-L-cysteine + CMP + diphosphate + H(+). The protein operates within cofactor biosynthesis; coenzyme A biosynthesis; CoA from (R)-pantothenate: step 2/5. It participates in cofactor biosynthesis; coenzyme A biosynthesis; CoA from (R)-pantothenate: step 3/5. Functionally, catalyzes two sequential steps in the biosynthesis of coenzyme A. In the first step cysteine is conjugated to 4'-phosphopantothenate to form 4-phosphopantothenoylcysteine. In the second step the latter compound is decarboxylated to form 4'-phosphopantotheine. This Vibrio vulnificus (strain CMCP6) protein is Coenzyme A biosynthesis bifunctional protein CoaBC.